The primary structure comprises 112 residues: 2Fe-2S ferredoxin (112 aa).

The region spanning 5–107 is the 2Fe-2S ferredoxin-type domain; that stretch reads IKVTFIVNDG…GIKVRLPSAT (103 aa). [2Fe-2S] cluster is bound by residues C42, C48, C51, and C88.

Belongs to the adrenodoxin/putidaredoxin family. The cofactor is [2Fe-2S] cluster.

In terms of biological role, ferredoxin are iron-sulfur proteins that transfer electrons in a wide variety of metabolic reactions. This chain is 2Fe-2S ferredoxin (fdxB), found in Rickettsia felis (strain ATCC VR-1525 / URRWXCal2) (Rickettsia azadi).